Here is a 493-residue protein sequence, read N- to C-terminus: ATP-dependent RNA helicase dbp3 (493 aa).

Residues methionine 1–lysine 38 form a disordered region. A compositionally biased stretch (basic and acidic residues) spans glutamate 23–glutamate 34. Positions serine 97–glutamine 105 match the Q motif motif. The 177-residue stretch at tryptophan 109–valine 285 folds into the Helicase ATP-binding domain. Alanine 122–threonine 129 provides a ligand contact to ATP. The DEAD box motif lies at aspartate 232 to aspartate 235. In terms of domain architecture, Helicase C-terminal spans arginine 316–glycine 462.

The protein belongs to the DEAD box helicase family. DDX5/DBP2 subfamily.

The protein localises to the nucleus. Its subcellular location is the nucleolus. The catalysed reaction is ATP + H2O = ADP + phosphate + H(+). Its function is as follows. ATP-dependent RNA helicase required for 60S ribosomal subunit synthesis. Involved in efficient pre-rRNA processing, predominantly at site A3, which is necessary for the normal formation of 25S and 5.8S rRNAs. The sequence is that of ATP-dependent RNA helicase dbp3 (dbp3) from Aspergillus terreus (strain NIH 2624 / FGSC A1156).